The primary structure comprises 230 residues: MAGCLRHFTSVGDDTKKREWKQEDVEVAYEEPLKNTPHPFIASYSFRGALKWLLSSHKFQIVIICLVILDALFVLVEVLLDLELLAEKVDHIIPEIFHYLSISVLTFFILEIAGKLYAFRLEFFHHKFEVFDAAIVVISFIIDIVYISREDIFNAVGLLILLRLWRVARIVNGVIVSVKTRAEEKMHKLKEQKGSLLEKVAQLEQQCAQQEQEIGRLHKLLQEHNVFPAS.

At 1 to 58 (MAGCLRHFTSVGDDTKKREWKQEDVEVAYEEPLKNTPHPFIASYSFRGALKWLLSSHK) the chain is on the cytoplasmic side. Residues 59-79 (FQIVIICLVILDALFVLVEVL) form a helical membrane-spanning segment. Residues 80–96 (LDLELLAEKVDHIIPEI) are Extracellular-facing. Residues 97–119 (FHYLSISVLTFFILEIAGKLYAF) traverse the membrane as a helical segment. At 120-127 (RLEFFHHK) the chain is on the cytoplasmic side. Residues 128–148 (FEVFDAAIVVISFIIDIVYIS) traverse the membrane as a helical segment. Over 149-155 (REDIFNA) the chain is Extracellular. A helical membrane pass occupies residues 156 to 176 (VGLLILLRLWRVARIVNGVIV). The Cytoplasmic segment spans residues 177-230 (SVKTRAEEKMHKLKEQKGSLLEKVAQLEQQCAQQEQEIGRLHKLLQEHNVFPAS). The stretch at 178 to 225 (VKTRAEEKMHKLKEQKGSLLEKVAQLEQQCAQQEQEIGRLHKLLQEHN) forms a coiled coil.

Belongs to the hydrogen channel family. As to quaternary structure, homodimer.

It is found in the membrane. Its subcellular location is the cell membrane. Mediates the voltage-dependent proton permeability of excitable membranes. Forms a proton-selective channel through which protons may pass in accordance with their electrochemical gradient. The sequence is that of Voltage-gated hydrogen channel 1 (hvcn1) from Xenopus laevis (African clawed frog).